The sequence spans 108 residues: U-scoloptoxin(16)-Er10a (108 aa).

Positions 1-24 are cleaved as a signal peptide; that stretch reads MASFTSFCVLFTFCLLLLAHQARS.

It belongs to the scoloptoxin-16 family. In terms of processing, contains 4 disulfide bonds. In terms of tissue distribution, expressed by the venom gland.

The protein resides in the secreted. The polypeptide is U-scoloptoxin(16)-Er10a (Ethmostigmus rubripes (Giant centipede)).